Consider the following 440-residue polypeptide: Transposon Ty1-DR3 Gag polyprotein (440 aa).

Composition is skewed to polar residues over residues 1–10, 48–60, and 127–152; these read MESQQLSNYP, TKAN…TPAS, and QSQF…GNTF. Disordered stretches follow at residues 1 to 93, 126 to 173, and 352 to 440; these read MESQ…MMTQ, PQSQ…RPPP, and GSRN…PETY. Low complexity predominate over residues 153-165; the sequence is TDSSSADSDMTST. The segment at 299-401 is RNA-binding; sequence NNGIHINNKV…NSKSKTARAH (103 aa). Residues 402–428 are compositionally biased toward polar residues; sequence NVSTSINSPSTDNDSISKSTTEPIQLN. A Phosphoserine modification is found at serine 416. Residues 429-440 show a composition bias toward basic and acidic residues; sequence NKHDLHLRPETY.

As to quaternary structure, homotrimer.

It is found in the cytoplasm. Its function is as follows. Capsid protein (CA) is the structural component of the virus-like particle (VLP), forming the shell that encapsulates the retrotransposons dimeric RNA genome. The particles are assembled from trimer-clustered units and there are holes in the capsid shells that allow for the diffusion of macromolecules. CA also has nucleocapsid-like chaperone activity, promoting primer tRNA(i)-Met annealing to the multipartite primer-binding site (PBS), dimerization of Ty1 RNA and initiation of reverse transcription. This chain is Transposon Ty1-DR3 Gag polyprotein (TY1A-DR3), found in Saccharomyces cerevisiae (strain ATCC 204508 / S288c) (Baker's yeast).